Reading from the N-terminus, the 195-residue chain is Imidazoleglycerol-phosphate dehydratase (195 aa).

This sequence belongs to the imidazoleglycerol-phosphate dehydratase family.

The protein resides in the cytoplasm. The enzyme catalyses D-erythro-1-(imidazol-4-yl)glycerol 3-phosphate = 3-(imidazol-4-yl)-2-oxopropyl phosphate + H2O. It participates in amino-acid biosynthesis; L-histidine biosynthesis; L-histidine from 5-phospho-alpha-D-ribose 1-diphosphate: step 6/9. The chain is Imidazoleglycerol-phosphate dehydratase from Cereibacter sphaeroides (strain ATCC 17025 / ATH 2.4.3) (Rhodobacter sphaeroides).